Consider the following 211-residue polypeptide: Ribosomal RNA small subunit methyltransferase G (211 aa).

S-adenosyl-L-methionine contacts are provided by residues Gly74, Leu79, 125 to 126 (AE), and Arg140.

It belongs to the methyltransferase superfamily. RNA methyltransferase RsmG family.

It localises to the cytoplasm. Functionally, specifically methylates the N7 position of guanine in position 518 of 16S rRNA. In Clavibacter michiganensis subsp. michiganensis (strain NCPPB 382), this protein is Ribosomal RNA small subunit methyltransferase G.